A 73-amino-acid polypeptide reads, in one-letter code: Translation initiation factor IF-1 (73 aa).

An S1-like domain is found at 1–73 (MAKKDGVIEI…TRGRIVYRYK (73 aa)).

This sequence belongs to the IF-1 family. In terms of assembly, component of the 30S ribosomal translation pre-initiation complex which assembles on the 30S ribosome in the order IF-2 and IF-3, IF-1 and N-formylmethionyl-tRNA(fMet); mRNA recruitment can occur at any time during PIC assembly.

Its subcellular location is the cytoplasm. Functionally, one of the essential components for the initiation of protein synthesis. Stabilizes the binding of IF-2 and IF-3 on the 30S subunit to which N-formylmethionyl-tRNA(fMet) subsequently binds. Helps modulate mRNA selection, yielding the 30S pre-initiation complex (PIC). Upon addition of the 50S ribosomal subunit IF-1, IF-2 and IF-3 are released leaving the mature 70S translation initiation complex. The polypeptide is Translation initiation factor IF-1 (Leifsonia xyli subsp. xyli (strain CTCB07)).